The following is a 368-amino-acid chain: Reverse transcriptase-like protein (368 aa).

The region spanning Thr-91–Val-318 is the Reverse transcriptase domain.

It localises to the mitochondrion. This is Reverse transcriptase-like protein (RTL) from Chlamydomonas reinhardtii (Chlamydomonas smithii).